The following is a 273-amino-acid chain: Phosphatidylglycerol--prolipoprotein diacylglyceryl transferase (273 aa).

The next 7 membrane-spanning stretches (helical) occupy residues 21 to 41 (ISVR…LWLA), 60 to 80 (LLFA…VLFY), 95 to 115 (VWTG…AMLW), 124 to 144 (FFGV…MGRM), 176 to 196 (SQLY…NWFI), 203 to 223 (GSVS…VEYV), and 236 to 256 (FISM…LMMV). R143 lines the a 1,2-diacyl-sn-glycero-3-phospho-(1'-sn-glycerol) pocket.

It belongs to the Lgt family.

The protein resides in the cell inner membrane. The catalysed reaction is L-cysteinyl-[prolipoprotein] + a 1,2-diacyl-sn-glycero-3-phospho-(1'-sn-glycerol) = an S-1,2-diacyl-sn-glyceryl-L-cysteinyl-[prolipoprotein] + sn-glycerol 1-phosphate + H(+). It functions in the pathway protein modification; lipoprotein biosynthesis (diacylglyceryl transfer). Functionally, catalyzes the transfer of the diacylglyceryl group from phosphatidylglycerol to the sulfhydryl group of the N-terminal cysteine of a prolipoprotein, the first step in the formation of mature lipoproteins. The chain is Phosphatidylglycerol--prolipoprotein diacylglyceryl transferase from Vibrio atlanticus (strain LGP32) (Vibrio splendidus (strain Mel32)).